The primary structure comprises 813 residues: Origin of replication complex subunit 1B (813 aa).

The disordered stretch occupies residues 1 to 109 (MASTPRAKTF…TPKKKKKIDS (109 aa)). Over residues 11–21 (KSPTKTPSNIY) the composition is skewed to polar residues. Over residues 27–41 (SPSSTSHTPQTPETH) the composition is skewed to low complexity. Positions 43–52 (PLRRSARHVS) are enriched in basic residues. A Nuclear localization signal motif is present at residues 83–90 (PRKPTTDV). The segment at 163–187 (DPEIEDCQICFKSDTNIMIECDDCL) is histone H3 binding. The PHD-type zinc finger occupies 166 to 215 (IEDCQICFKSDTNIMIECDDCLGGFHLKCLKPPLKEVPEGDWICQFCEVK). Zn(2+) contacts are provided by Cys169, Cys172, Cys183, Cys186, His191, and Cys194. Positions 203-207 (PEGDW) are histone H3 binding. Residues Cys209 and Cys212 each coordinate Zn(2+). Residues 226 to 344 (PKPPEGKKLA…VHWRSFKRLA (119 aa)) enclose the BAH domain. Residues 319–324 (ASNDGD) form a histone H3 binding region. A disordered region spans residues 349 to 372 (GDSDSDQEWNGRKEEEVDDSDEEM). A necessary and sufficient for ORC complex assembly region spans residues 436 to 803 (PKSLPCRSKE…DDVAFALKDN (368 aa)). An ATP-binding site is contributed by 471-479 (GVPGTGKTI). The Mg(2+) site is built by Asp561 and Glu562. Residues Glu562, Asn595, and Arg660 each contribute to the ATP site.

Belongs to the ORC1 family. Component of the origin recognition complex (ORC) composed of at least ORC1 (ORC1A or ORC1B), ORC2, ORC3, ORC4, ORC5 and ORC6. ORC is regulated in a cell-cycle and development dependent manner. It is sequentially assembled at the exit from anaphase of mitosis and disassembled as cells enter S phase. Interacts directly with ORC2 and ORC5. Binds mostly unmodified histone H3, and, with lower efficiency, H3K4me1 H3K4me2 and H3K4me3. Follow a cell-cycle regulation with a peak at the G1/S-phase. Mostly expressed in flower buds, and, to a lower exent, in roots, leaves and stems.

It localises to the nucleus. In terms of biological role, essential protein required for ovules fertilization. Component of the origin recognition complex (ORC) that binds origins of replication. It has a role in both chromosomal replication and mating type transcriptional silencing. Binds to the ARS consensus sequence (ACS) of origins of replication. H3K4me3 effector that positively regulates the transcription of a subset of genes. The protein is Origin of replication complex subunit 1B of Arabidopsis thaliana (Mouse-ear cress).